Consider the following 459-residue polypeptide: Phosphoglucosamine mutase (459 aa).

Residue serine 106 is the Phosphoserine intermediate of the active site. Mg(2+)-binding residues include serine 106, aspartate 247, aspartate 249, and aspartate 251. Serine 106 is subject to Phosphoserine.

It belongs to the phosphohexose mutase family. Requires Mg(2+) as cofactor. In terms of processing, activated by phosphorylation.

It catalyses the reaction alpha-D-glucosamine 1-phosphate = D-glucosamine 6-phosphate. In terms of biological role, catalyzes the conversion of glucosamine-6-phosphate to glucosamine-1-phosphate. This Chlamydia muridarum (strain MoPn / Nigg) protein is Phosphoglucosamine mutase.